The following is a 146-amino-acid chain: D-aminoacyl-tRNA deacylase (146 aa).

A Gly-cisPro motif, important for rejection of L-amino acids motif is present at residues 138–139 (GP).

It belongs to the DTD family. Homodimer.

It localises to the cytoplasm. It carries out the reaction glycyl-tRNA(Ala) + H2O = tRNA(Ala) + glycine + H(+). The catalysed reaction is a D-aminoacyl-tRNA + H2O = a tRNA + a D-alpha-amino acid + H(+). In terms of biological role, an aminoacyl-tRNA editing enzyme that deacylates mischarged D-aminoacyl-tRNAs. Also deacylates mischarged glycyl-tRNA(Ala), protecting cells against glycine mischarging by AlaRS. Acts via tRNA-based rather than protein-based catalysis; rejects L-amino acids rather than detecting D-amino acids in the active site. By recycling D-aminoacyl-tRNA to D-amino acids and free tRNA molecules, this enzyme counteracts the toxicity associated with the formation of D-aminoacyl-tRNA entities in vivo and helps enforce protein L-homochirality. In Xanthomonas campestris pv. campestris (strain 8004), this protein is D-aminoacyl-tRNA deacylase.